The sequence spans 295 residues: MIKRVILFLATNLAVLLVLSISMRLLGIESLLNQQGTDLNLNALLIFAAIIGFSGSLISLAISKFTAKRLTGAQVIERPRSTTEVWLLETVQRHARMAGIGMPEVAIYASPEPNAFATGWNRNAALVAVSSGLLEQMNQNEVEAVLGHEISHVANGDMVTLALIQGVVNTFVIFLARIIGHLVDRVVFKTERGYGPAFFITTLIAQTVLAILASLIVLWFSRQREFRADAGGAQLAGKEKMIAALERLGRMAQEGLPEQLQAFGIAGGERSQGWKRLFMSHPPIEERIAALRAEH.

2 helical membrane passes run 5-25 (VILFLATNLAVLLVLSISMRL) and 43-63 (ALLIFAAIIGFSGSLISLAIS). A Zn(2+)-binding site is contributed by His-148. Glu-149 is a catalytic residue. Residue His-152 participates in Zn(2+) binding. 2 consecutive transmembrane segments (helical) span residues 159-179 (VTLALIQGVVNTFVIFLARII) and 198-218 (FFITTLIAQTVLAILASLIVL). Position 225 (Glu-225) interacts with Zn(2+).

The protein belongs to the peptidase M48B family. Requires Zn(2+) as cofactor.

It localises to the cell inner membrane. This Nitrosococcus oceani (strain ATCC 19707 / BCRC 17464 / JCM 30415 / NCIMB 11848 / C-107) protein is Protease HtpX.